We begin with the raw amino-acid sequence, 163 residues long: MTAYDVVIEIPKGSRNKYEVDHETGRVYLDRVLFTAFVYPADYGFFENTLGDDGDPLDVLVLLEYPVFPGVGIKVRPVGVLKMSDEAGGDAKIIAVQHKDPRWQHIQDVNDIPEYTRKEIEHFFARYKDLEPGKFVTIEGWGDAAEAEKIVQAGFANLEAQGH.

Glu9 lines the Mg(2+) pocket. Lys17, Arg31, and Tyr43 together coordinate substrate. Mg(2+) contacts are provided by Asp53, Asp58, Asp85, and Asp90. Asp90 serves as the catalytic Proton acceptor. Tyr127 contributes to the substrate binding site.

Belongs to the PPase family. Homohexamer. Mg(2+) is required as a cofactor.

The protein resides in the cytoplasm. The enzyme catalyses diphosphate + H2O = 2 phosphate + H(+). Functionally, catalyzes the hydrolysis of inorganic pyrophosphate (PPi) forming two phosphate ions. In Leifsonia xyli subsp. xyli (strain CTCB07), this protein is Inorganic pyrophosphatase.